The sequence spans 138 residues: NADH dehydrogenase [ubiquinone] 1 alpha subcomplex subunit N7BM (138 aa).

This sequence belongs to the complex I NDUFA12 subunit family. In terms of assembly, complex I is composed of 42 different subunits.

Its subcellular location is the mitochondrion inner membrane. Accessory subunit of the mitochondrial membrane respiratory chain NADH dehydrogenase (Complex I), that is believed not to be involved in catalysis. Complex I functions in the transfer of electrons from NADH to the respiratory chain. The immediate electron acceptor for the enzyme is believed to be ubiquinone. The protein is NADH dehydrogenase [ubiquinone] 1 alpha subcomplex subunit N7BM of Yarrowia lipolytica (strain CLIB 122 / E 150) (Yeast).